Consider the following 58-residue polypeptide: Pepsin-1 (58 aa).

The propeptide at 1–41 (LLQVPLEKGQSAREYLQEQGLWEQYRLKYPYNPMAKFDPSF) is activation peptide.

It belongs to the peptidase A1 family.

This Thunnus orientalis (North Pacific bluefin tuna) protein is Pepsin-1.